Consider the following 396-residue polypeptide: Homoserine O-acetyltransferase (396 aa).

Residues 53–370 (NAILVCHALT…DRGHDAFLLE (318 aa)) form the AB hydrolase-1 domain. Catalysis depends on serine 158, which acts as the Nucleophile. Arginine 228 provides a ligand contact to substrate. Active-site residues include aspartate 331 and histidine 364. Aspartate 365 contacts substrate.

It belongs to the AB hydrolase superfamily. MetX family. Homodimer.

Its subcellular location is the cytoplasm. It catalyses the reaction L-homoserine + acetyl-CoA = O-acetyl-L-homoserine + CoA. Its pathway is amino-acid biosynthesis; L-methionine biosynthesis via de novo pathway; O-acetyl-L-homoserine from L-homoserine: step 1/1. In terms of biological role, transfers an acetyl group from acetyl-CoA to L-homoserine, forming acetyl-L-homoserine. This Gluconobacter oxydans (strain 621H) (Gluconobacter suboxydans) protein is Homoserine O-acetyltransferase.